A 676-amino-acid chain; its full sequence is MDKYDDLGLEASKFIEDLNMYEASKDGLFRVDKGAGNNPEFEETRRVFATKMAKIHLQQQQQQLLQEETLPRGSRGPVNGGGRLGPQARWEVVGSKLTVDGAAKPPLAASTGAPGAVTTLAAGQPPYPPQEQRSRPYLHGTRHGSQDCGSRESLATSEMSAFHQPGPCEDPSCLTHGDYYDNLSLASPKWGDKPGVSPSIGLSVGSGWPSSPGSDPPLPKPCGDHPLNHRQLSLSSSRSSEGSLGGQNSGIGGRSSEKPTGLWSTASSQRVSPGLPSPNLENGAPAVGPVQPRTPSVSAPLALSCPRQGGLPRSNSGLGGEVSGVMSKPNVDPQPWFQDGPKSYLSSSAPSSSPAGLDGSQQGAVPGLGPKPGCTDLGTGPKLSPTSLVHPVMSTLPELSCKEGPLGWSSDGSLGSVLLDSPSSPRVRLPCQPLVPGPELRPSAAELKLEALTQRLEREMDAHPKADYFGACVKCSKGVFGAGQACQAMGNLYHDTCFTCAACSRKLRGKAFYFVNGKVFCEEDFLYSGFQQSADRCFLCGHLIMDMILQALGKSYHPGCFRCVICNECLDGVPFTVDSENKIYCVRDYHKVLAPKCAACGLPILPPEGSDETIRVVSMDRDYHVECYHCEDCGLELNDEDGHRCYPLEDHLFCHSCHVKRLEKRPSSTALHQHHF.

Positions 54–134 are mediates nuclear export; it reads KIHLQQQQQQ…PPYPPQEQRS (81 aa). Disordered regions lie at residues 104 to 163 and 189 to 389; these read KPPL…SAFH and KWGD…TSLV. Residue Ser145 is modified to Phosphoserine. Residues 186–260 form an interaction with EGLN1/PHD2 region; it reads ASPKWGDKPG…IGGRSSEKPT (75 aa). Composition is skewed to low complexity over residues 201-213 and 232-242; these read GLSVGSGWPSSPG and LSLSSSRSSEG. Phosphoserine is present on residues Ser233 and Ser239. A compositionally biased stretch (gly residues) spans 243-253; that stretch reads SLGGQNSGIGG. A compositionally biased stretch (polar residues) spans 262–271; it reads LWSTASSQRV. Phosphoserine is present on residues Ser272, Ser277, Ser304, and Ser316. The span at 343-360 shows a compositional bias: low complexity; the sequence is SYLSSSAPSSSPAGLDGS. The segment at 404 to 442 is interaction with RB1; that stretch reads GPLGWSSDGSLGSVLLDSPSSPRVRLPCQPLVPGPELRP. A phosphoserine mark is found at Ser421 and Ser424. LIM zinc-binding domains follow at residues 470–531, 535–595, and 595–664; these read GACV…SGFQ, DRCF…VLAP, and PKCA…RLEK. The interval 472–676 is necessary for nuclear localization; the sequence is CVKCSKGVFG…SSTALHQHHF (205 aa).

The protein belongs to the zyxin/ajuba family. In terms of assembly, interacts (via LIM domains) with TRAF6. Found in a complex with TRAF6, PRKCZ and SQSTM1. Interacts (via LIM domains) SNAI2/SLUG (via SNAG domain) and SCRT1 (via SNAG domain). Interacts with SQSTM1 and RB1. Found in a complex composed of LIMD1, VHL, EGLN1/PHD2, ELOB and CUL2. Interacts with EIF4E, AGO1, AGO2, DCP2, DDX6, LATS1, LATS2, EGLN1/PHD2, EGLN2/PHD1 and EGLN3/PHD3. Interacts (via LIM zinc-binding 2) with isoform 1 and isoform 3 of VHL. Interacts (via LIM domains) with SNAI1 (via SNAG domain). Post-translationally, phosphorylated during mitosis. In terms of tissue distribution, expressed in normal and breast cancer tissues (at protein level). Ubiquitous.

It localises to the cytoplasm. It is found in the nucleus. The protein resides in the P-body. Its subcellular location is the cell junction. The protein localises to the adherens junction. It localises to the focal adhesion. In terms of biological role, adapter or scaffold protein which participates in the assembly of numerous protein complexes and is involved in several cellular processes such as cell fate determination, cytoskeletal organization, repression of gene transcription, cell-cell adhesion, cell differentiation, proliferation and migration. Positively regulates microRNA (miRNA)-mediated gene silencing and is essential for P-body formation and integrity. Acts as a hypoxic regulator by bridging an association between the prolyl hydroxylases and VHL enabling efficient degradation of HIF1A. Acts as a transcriptional corepressor for SNAI1- and SNAI2/SLUG-dependent repression of E-cadherin transcription. Negatively regulates the Hippo signaling pathway and antagonizes phosphorylation of YAP1. Inhibits E2F-mediated transcription, and suppresses the expression of the majority of genes with E2F1-responsive elements. Regulates osteoblast development, function, differentiation and stress osteoclastogenesis. Enhances the ability of TRAF6 to activate adapter protein complex 1 (AP-1) and negatively regulates the canonical Wnt receptor signaling pathway in osteoblasts. May act as a tumor suppressor by inhibiting cell proliferation. This is LIM domain-containing protein 1 (LIMD1) from Homo sapiens (Human).